Consider the following 139-residue polypeptide: Cystatin-11 (139 aa).

A signal peptide spans Met-1 to Arg-28. Disulfide bonds link Cys-94–Cys-102 and Cys-115–Cys-135. Asn-134 is a glycosylation site (N-linked (GlcNAc...) asparagine).

The protein belongs to the cystatin family.

It is found in the secreted. In terms of biological role, has antibacterial activity against the Gram-negative bacteria E.coli. May play a role in sperm maturation and fertilization. This Rattus norvegicus (Rat) protein is Cystatin-11 (Cst11).